A 466-amino-acid chain; its full sequence is ATP synthase subunit beta (466 aa).

155–162 (GGAGVGKT) provides a ligand contact to ATP.

The protein belongs to the ATPase alpha/beta chains family. In terms of assembly, F-type ATPases have 2 components, CF(1) - the catalytic core - and CF(0) - the membrane proton channel. CF(1) has five subunits: alpha(3), beta(3), gamma(1), delta(1), epsilon(1). CF(0) has three main subunits: a(1), b(2) and c(9-12). The alpha and beta chains form an alternating ring which encloses part of the gamma chain. CF(1) is attached to CF(0) by a central stalk formed by the gamma and epsilon chains, while a peripheral stalk is formed by the delta and b chains.

Its subcellular location is the cell inner membrane. It catalyses the reaction ATP + H2O + 4 H(+)(in) = ADP + phosphate + 5 H(+)(out). Functionally, produces ATP from ADP in the presence of a proton gradient across the membrane. The catalytic sites are hosted primarily by the beta subunits. The polypeptide is ATP synthase subunit beta (Bordetella avium (strain 197N)).